The chain runs to 515 residues: Kelch repeat protein M-T8 (515 aa).

Positions 16–82 (CDVEIVAEGK…MYTESIELHK (67 aa)) constitute a BTB domain. Kelch repeat units follow at residues 280 to 326 (VLYF…AIGG), 328 to 374 (IYII…CYKN), 376 to 423 (IWVL…VYKE), 424 to 471 (RLYC…VYND), and 473 to 512 (LYVFGGTDTFTSERYNGVIWKRANDVSCHFATMNAAYATY).

Belongs to the poxviruses Kelch family.

The sequence is that of Kelch repeat protein M-T8 from Oryctolagus cuniculus (Rabbit).